Reading from the N-terminus, the 556-residue chain is Man(5)GlcNAc(2)-PP-dolichol translocation protein RFT1 (556 aa).

A run of 12 helical transmembrane segments spans residues 10–30 (LLGAGFSIIFQILCRILTFGI), 41–61 (EVLGIMNVRLLLLESTLLFLS), 91–111 (LTVPICAVLCAPCLYIWLNWL), 129–149 (VAFSCVLELMAESAVFVAQVF), 156–176 (ILLNTLHILVRSAIFLWIVTG), 184–204 (AFAIAQLSSAVTIVLGQYGFF), 353–373 (SVLNNLLLGVSSIGLIAFTFG), 389–409 (FVAGGLPQSLLQWHCLAIYLL), 440–460 (VSFLVLSYILTGIFGPVGFIF), 461–477 (ANCINMLSRILYSTYYI), 489–509 (LLGLWPGKLFGCTLFLAGIVC), and 517–537 (LATHLGVGVLAGLACLLSWAL).

This sequence belongs to the RFT1 family.

It localises to the endoplasmic reticulum membrane. Its pathway is protein modification; protein glycosylation. Functionally, intramembrane glycolipid transporter that operates in the biosynthetic pathway of dolichol-linked oligosaccharides, the glycan precursors employed in protein asparagine (N)-glycosylation. The sequential addition of sugars to dolichol pyrophosphate produces dolichol-linked oligosaccharides containing fourteen sugars, including two GlcNAcs, nine mannoses and three glucoses. Once assembled, the oligosaccharide is transferred from the lipid to nascent proteins by oligosaccharyltransferases. The assembly of dolichol-linked oligosaccharides begins on the cytosolic side of the endoplasmic reticulum membrane and finishes in its lumen. RFT1 could mediate the translocation of the cytosolically oriented intermediate DolPP-GlcNAc2Man5, produced by ALG11, into the ER lumen where dolichol-linked oligosaccharides assembly continues. However, the intramembrane lipid transporter activity could not be confirmed in vitro. This chain is Man(5)GlcNAc(2)-PP-dolichol translocation protein RFT1, found in Drosophila melanogaster (Fruit fly).